We begin with the raw amino-acid sequence, 260 residues long: Eukaryotic translation initiation factor 3 subunit G-2 (260 aa).

Residues 180 to 258 form the RRM domain; the sequence is CAVRISNLSE…LILSVEWSKP (79 aa).

This sequence belongs to the eIF-3 subunit G family. In terms of assembly, component of the eukaryotic translation initiation factor 3 (eIF-3) complex. The eIF-3 complex interacts with pix.

The protein localises to the cytoplasm. In terms of biological role, RNA-binding component of the eukaryotic translation initiation factor 3 (eIF-3) complex, which is involved in protein synthesis of a specialized repertoire of mRNAs and, together with other initiation factors, stimulates binding of mRNA and methionyl-tRNAi to the 40S ribosome. The eIF-3 complex specifically targets and initiates translation of a subset of mRNAs involved in cell proliferation. This subunit can bind 18S rRNA. This is Eukaryotic translation initiation factor 3 subunit G-2 from Drosophila grimshawi (Hawaiian fruit fly).